A 462-amino-acid polypeptide reads, in one-letter code: Serine--tRNA ligase, cytoplasmic (462 aa).

Residue 246 to 248 coordinates L-serine; sequence TSE. ATP contacts are provided by residues 279–281 and Val295; that span reads RRE. Position 302 (Glu302) interacts with L-serine. 366 to 369 provides a ligand contact to ATP; it reads ELVS. Position 404 (Thr404) interacts with L-serine.

It belongs to the class-II aminoacyl-tRNA synthetase family. Type-1 seryl-tRNA synthetase subfamily. Homodimer. The tRNA molecule binds across the dimer.

Its subcellular location is the cytoplasm. It is found in the cytosol. It catalyses the reaction tRNA(Ser) + L-serine + ATP = L-seryl-tRNA(Ser) + AMP + diphosphate + H(+). Functionally, catalyzes the attachment of serine to tRNA(Ser) in a two-step reaction: serine is first activated by ATP to form Ser-AMP and then transferred to the acceptor end of tRNA(Ser). In Candida albicans (strain SC5314 / ATCC MYA-2876) (Yeast), this protein is Serine--tRNA ligase, cytoplasmic (SES1).